Reading from the N-terminus, the 455-residue chain is Ribosomal protein uS12 methylthiotransferase RimO (455 aa).

Residues Gly21–Pro131 enclose the MTTase N-terminal domain. [4Fe-4S] cluster-binding residues include Cys30, Cys66, Cys95, Cys164, Cys168, and Cys171. In terms of domain architecture, Radical SAM core spans Leu150–Ala387. In terms of domain architecture, TRAM spans Gln390 to Ile455.

This sequence belongs to the methylthiotransferase family. RimO subfamily. Requires [4Fe-4S] cluster as cofactor.

The protein localises to the cytoplasm. The enzyme catalyses L-aspartate(89)-[ribosomal protein uS12]-hydrogen + (sulfur carrier)-SH + AH2 + 2 S-adenosyl-L-methionine = 3-methylsulfanyl-L-aspartate(89)-[ribosomal protein uS12]-hydrogen + (sulfur carrier)-H + 5'-deoxyadenosine + L-methionine + A + S-adenosyl-L-homocysteine + 2 H(+). Catalyzes the methylthiolation of an aspartic acid residue of ribosomal protein uS12. In Marinobacter nauticus (strain ATCC 700491 / DSM 11845 / VT8) (Marinobacter aquaeolei), this protein is Ribosomal protein uS12 methylthiotransferase RimO.